The following is a 92-amino-acid chain: N(2)-fixation sustaining protein CowN (92 aa).

Belongs to the CowN family.

Its function is as follows. Is required to sustain N(2)-dependent growth in the presence of low levels of carbon monoxide (CO). Probably acts by protecting the N(2) fixation ability of the nitrogenase complex, which is inactivated in the presence of CO. This Rhodopseudomonas palustris (strain BisB18) protein is N(2)-fixation sustaining protein CowN.